The sequence spans 95 residues: Co-chaperonin GroES (95 aa).

This sequence belongs to the GroES chaperonin family. Heptamer of 7 subunits arranged in a ring. Interacts with the chaperonin GroEL.

Its subcellular location is the cytoplasm. Its function is as follows. Together with the chaperonin GroEL, plays an essential role in assisting protein folding. The GroEL-GroES system forms a nano-cage that allows encapsulation of the non-native substrate proteins and provides a physical environment optimized to promote and accelerate protein folding. GroES binds to the apical surface of the GroEL ring, thereby capping the opening of the GroEL channel. This chain is Co-chaperonin GroES, found in Rickettsia felis (strain ATCC VR-1525 / URRWXCal2) (Rickettsia azadi).